Here is an 89-residue protein sequence, read N- to C-terminus: Small ribosomal subunit protein uS15 (89 aa).

Belongs to the universal ribosomal protein uS15 family. Part of the 30S ribosomal subunit. Forms a bridge to the 50S subunit in the 70S ribosome, contacting the 23S rRNA.

In terms of biological role, one of the primary rRNA binding proteins, it binds directly to 16S rRNA where it helps nucleate assembly of the platform of the 30S subunit by binding and bridging several RNA helices of the 16S rRNA. Functionally, forms an intersubunit bridge (bridge B4) with the 23S rRNA of the 50S subunit in the ribosome. The protein is Small ribosomal subunit protein uS15 of Micrococcus luteus (strain ATCC 4698 / DSM 20030 / JCM 1464 / CCM 169 / CCUG 5858 / IAM 1056 / NBRC 3333 / NCIMB 9278 / NCTC 2665 / VKM Ac-2230) (Micrococcus lysodeikticus).